The primary structure comprises 146 residues: MMDIHQILKLLPHRYPFLLVDRVVELERGERIQAIKNVTINEPFFTGHFPNRPVMPGVLMLEALAQAAGLLSFDMMGEAPGDDKVFYFVGIDGARFKRPVEPGDQLILDVKLDRIKGGIYKFGGVARVGDSVACEAEIMCTMRTVA.

His-48 is a catalytic residue.

Belongs to the thioester dehydratase family. FabZ subfamily.

The protein localises to the cytoplasm. The enzyme catalyses a (3R)-hydroxyacyl-[ACP] = a (2E)-enoyl-[ACP] + H2O. Functionally, involved in unsaturated fatty acids biosynthesis. Catalyzes the dehydration of short chain beta-hydroxyacyl-ACPs and long chain saturated and unsaturated beta-hydroxyacyl-ACPs. This chain is 3-hydroxyacyl-[acyl-carrier-protein] dehydratase FabZ, found in Paracidovorax citrulli (strain AAC00-1) (Acidovorax citrulli).